We begin with the raw amino-acid sequence, 133 residues long: p53 and DNA damage-regulated protein 1 (133 aa).

This sequence belongs to the prefoldin subunit beta family. In terms of assembly, component of the PAQosome complex which is responsible for the biogenesis of several protein complexes and which consists of R2TP complex members RUVBL1, RUVBL2, RPAP3 and PIH1D1, URI complex members PFDN2, PFDN6, PDRG1, UXT and URI1 as well as ASDURF, POLR2E and DNAAF10/WDR92.

It is found in the cytoplasm. In terms of biological role, may play a role in chaperone-mediated protein folding. The chain is p53 and DNA damage-regulated protein 1 (PDRG1) from Bos taurus (Bovine).